Consider the following 452-residue polypeptide: PTS system N-acetylglucosamine-specific EIICB component (452 aa).

Residues 1 to 361 form the PTS EIIC type-1 domain; that stretch reads MLSFLQKLGK…LNLKTPGRED (361 aa). 9 consecutive transmembrane segments (helical) span residues 8 to 28, 42 to 62, 91 to 111, 130 to 150, 163 to 183, 223 to 243, 257 to 277, 279 to 299, and 329 to 349; these read LGKS…ILAL, AGTA…AIGI, TNNM…YTYN, LVPI…GVVW, WMLG…RLLI, MTGF…AMVV, MIGF…EFAF, FLSP…LFIV, and LLLL…YVLI. The PTS EIIB type-1 domain occupies 375–452; the sequence is DVNENIMLKG…AAEELRAAVK (78 aa). Catalysis depends on Cys-397, which acts as the Phosphocysteine intermediate; for EIIB activity.

As to quaternary structure, interacts with FloT.

It localises to the cell membrane. The protein resides in the membrane raft. It catalyses the reaction N(pros)-phospho-L-histidyl-[protein] + N-acetyl-D-glucosamine(out) = N-acetyl-D-glucosamine 6-phosphate(in) + L-histidyl-[protein]. Its function is as follows. The phosphoenolpyruvate-dependent sugar phosphotransferase system (sugar PTS), a major carbohydrate active -transport system, catalyzes the phosphorylation of incoming sugar substrates concomitantly with their translocation across the cell membrane. This system is involved in N-acetylglucosamine transport. This Bacillus subtilis (strain 168) protein is PTS system N-acetylglucosamine-specific EIICB component (nagP).